The chain runs to 209 residues: Ribonuclease HII (209 aa).

In terms of domain architecture, RNase H type-2 spans 20-209; the sequence is DSEIGIDEVG…KSFLNKLNLI (190 aa). 3 residues coordinate a divalent metal cation: Asp26, Glu27, and Asp122.

The protein belongs to the RNase HII family. It depends on Mn(2+) as a cofactor. Mg(2+) serves as cofactor.

Its subcellular location is the cytoplasm. It carries out the reaction Endonucleolytic cleavage to 5'-phosphomonoester.. Endonuclease that specifically degrades the RNA of RNA-DNA hybrids. The polypeptide is Ribonuclease HII (Prochlorococcus marinus subsp. pastoris (strain CCMP1986 / NIES-2087 / MED4)).